A 449-amino-acid polypeptide reads, in one-letter code: Acetolactate synthase small subunit 1, chloroplastic (449 aa).

The transit peptide at 1–30 (MEHIQTRTTLSQLSTLPSDKRLGAIRFKCL) directs the protein to the chloroplast. 2 ACT domains span residues 31–98 (LVMK…DLSK) and 259–333 (TLSM…DITH).

It belongs to the acetolactate synthase small subunit family. As to quaternary structure, the acetolactate synthase complex contains both large catalytic subunits and small regulatory subunits.

It localises to the plastid. It is found in the chloroplast. The protein operates within amino-acid biosynthesis; L-isoleucine biosynthesis; L-isoleucine from 2-oxobutanoate: step 1/4. Its pathway is amino-acid biosynthesis; L-valine biosynthesis; L-valine from pyruvate: step 1/4. In terms of biological role, regulatory subunit of acetohydroxy-acid synthase. Probably involved in feedback inhibition by branched-chain amino acids. Not involved in herbicide tolerance. The protein is Acetolactate synthase small subunit 1, chloroplastic of Nicotiana plumbaginifolia (Leadwort-leaved tobacco).